Reading from the N-terminus, the 324-residue chain is [Acyl-carrier-protein] phosphodiesterase PptH (324 aa).

Mn(2+) contacts are provided by D22, H24, and D51. Fe cation contacts are provided by D51, N79, H205, and H246. A Mn(2+)-binding site is contributed by H248.

Belongs to the metallophosphoesterase superfamily. It depends on Fe(3+) as a cofactor. Mn(2+) is required as a cofactor.

The enzyme catalyses holo-[ACP] + H2O = apo-[ACP] + (R)-4'-phosphopantetheine + H(+). Functionally, catalyzes the hydrolysis of the phosphopantetheine group from substrate holo-carrier proteins. This chain is [Acyl-carrier-protein] phosphodiesterase PptH, found in Mycobacterium tuberculosis (strain ATCC 25618 / H37Rv).